The sequence spans 270 residues: Proteasome subunit alpha type-1 (270 aa).

The segment at Ser239 to Ile270 is disordered. Over residues Glu245–Met256 the composition is skewed to low complexity.

Belongs to the peptidase T1A family. The 26S proteasome consists of a 20S proteasome core and two 19S regulatory subunits. The 20S proteasome core is composed of 28 subunits that are arranged in four stacked rings, resulting in a barrel-shaped structure. The two end rings are each formed by seven alpha subunits, and the two central rings are each formed by seven beta subunits. The catalytic chamber with the active sites is on the inside of the barrel.

The protein localises to the cytoplasm. The protein resides in the nucleus. The proteasome is a multicatalytic proteinase complex which is characterized by its ability to cleave peptides with Arg, Phe, Tyr, Leu, and Glu adjacent to the leaving group at neutral or slightly basic pH. The proteasome has an ATP-dependent proteolytic activity. This chain is Proteasome subunit alpha type-1 (PAF1), found in Oryza sativa subsp. japonica (Rice).